A 585-amino-acid polypeptide reads, in one-letter code: MKRTHYCGELTRELVGKKVVLKGWADNRRDHGKLIFIDMRDNSGLVQVVCDFESNPEALEVADSVRSEYVLEITGTVRERSPENVNPDLKTGEIEVDCEDINVLNTSKTPPFFINENVDVDENIRLKYRYLDLRRPSMQNNIYLRHKITKLVRDFLDENGFIEVETPMLTKSTPEGARDFLVPSRLHEGSFYALPQSPQLFKQLLMASGVEKYFQIARCFRDEDLRADRQPEFSQIDIEMSFFEQEEFMKLMENMVSKLFKEVLGIELTKPFPRITYQEAMDRYGSDSPDLRYGLELHDVSDLVKDAEFKVFRETVASEGQVKGIAVPQGQEFSRKEIDDLTEFVKEFGAKGLAWMVLEEEEIKSPIAKFFSDEELDGIIDRMGANTGDLLLFVADEPEIVADSLSKLREHLANKLDLIPSNEYQLTWVIDFPLMEYDKDEGRYKALHHPFTSPYEDDLEKYENEPEKIRAKAYDLVLNGVEIGGGSMRIHQKELQEKMFEFLGIPLEEAKQKFGFLFEAFEYGTPPHGGIAFGLDRLVMLFTGSQSIRDVIAFPKTANASCLMTEAPAKVDENQLKELHLKTTK.

Position 175 (E175) interacts with L-aspartate. Positions Q199–K202 are aspartate. R221 is an L-aspartate binding site. ATP contacts are provided by residues R221–E223 and Q230. H448 serves as a coordination point for L-aspartate. E482 is an ATP binding site. Position 489 (R489) interacts with L-aspartate. G534–R537 lines the ATP pocket.

Belongs to the class-II aminoacyl-tRNA synthetase family. Type 1 subfamily. Homodimer.

The protein resides in the cytoplasm. The enzyme catalyses tRNA(Asx) + L-aspartate + ATP = L-aspartyl-tRNA(Asx) + AMP + diphosphate. Its function is as follows. Aspartyl-tRNA synthetase with relaxed tRNA specificity since it is able to aspartylate not only its cognate tRNA(Asp) but also tRNA(Asn). Reaction proceeds in two steps: L-aspartate is first activated by ATP to form Asp-AMP and then transferred to the acceptor end of tRNA(Asp/Asn). This is Aspartate--tRNA(Asp/Asn) ligase from Natranaerobius thermophilus (strain ATCC BAA-1301 / DSM 18059 / JW/NM-WN-LF).